Reading from the N-terminus, the 89-residue chain is Small ribosomal subunit protein uS15 (89 aa).

This sequence belongs to the universal ribosomal protein uS15 family. In terms of assembly, part of the 30S ribosomal subunit. Forms a bridge to the 50S subunit in the 70S ribosome, contacting the 23S rRNA.

One of the primary rRNA binding proteins, it binds directly to 16S rRNA where it helps nucleate assembly of the platform of the 30S subunit by binding and bridging several RNA helices of the 16S rRNA. Functionally, forms an intersubunit bridge (bridge B4) with the 23S rRNA of the 50S subunit in the ribosome. The chain is Small ribosomal subunit protein uS15 from Bifidobacterium adolescentis (strain ATCC 15703 / DSM 20083 / NCTC 11814 / E194a).